A 1871-amino-acid polypeptide reads, in one-letter code: MENEIFTPLLEQFMTSPLVTWVKTFGPLAAGNGTNLDEYVALVDGVFLNQVMLQINPKLESQRVNKKVNNDASLRMHNLSILVRQIKFYYQETLQQLIMMSLPNVLIIGKNPFSEQGTEEVKKLLLLLLGCAVQCQKKEEFIERIQGLDFDTKAAVAAHIQEVTHNQENVFDLQWMEVTDMSQEDIEPLLKNMALHLKRLIDERDEHSETIIELSEERDGLHFLPHASSSAQSPCGSPGMKRTESRQHLSVELADAKAKIRRLRQELEEKTEQLLDCKQELEQMEIELKRLQQENMNLLSDARSARMYRDELDALREKAVRVDKLESEVSRYKERLHDIEFYKARVEELKEDNQVLLETKTMLEDQLEGTRARSDKLHELEKENLQLKAKLHDMEMERDMDRKKIEELMEENMTLEMAQKQSMDESLHLGWELEQISRTSELSEAPQKSLGHEVNELTSSRLLKLEMENQSLTKTVEELRTTVDSVEGNASKILKMEKENQRLSKKVEILENEIVQEKQSLQNCQNLSKDLMKEKAQLEKTIETLRENSERQIKILEQENEHLNQTVSSLRQRSQISAEARVKDIEKENKILHESIKETSSKLSKIEFEKRQIKKELEHYKEKGERAEELENELHHLEKENELLQKKITNLKITCEKIEALEQENSELERENRKLKKTLDSFKNLTFQLESLEKENSQLDEENLELRRNVESLKCASMKMAQLQLENKELESEKEQLKKGLELLKASFKKTERLEVSYQGLDIENQRLQKTLENSNKKIQQLESELQDLEMENQTLQKNLEELKISSKRLEQLEKENKSLEQETSQLEKDKKQLEKENKRLRQQAEIKDTTLEENNVKIGNLEKENKTLSKEIGIYKESCVRLKELEKENKELVKRATIDIKTLVTLREDLVSEKLKTQQMNNDLEKLTHELEKIGLNKERLLHDEQSTDDSRYKLLESKLESTLKKSLEIKEEKIAALEARLEESTNYNQQLRQELKTVKKNYEALKQRQDEERMVQSSPPISGEDNKWERESQETTRELLKVKDRLIEVERNNATLQAEKQALKTQLKQLETQNNNLQAQILALQRQTVSLQEQNTTLQTQNAKLQVENSTLNSQSTSLMNQNAQLLIQQSSLENENESVIKEREDLKSLYDSLIKDHEKLELLHERQASEYESLISKHGTLKSAHKNLEVEHRDLEDRYNQLLKQKGQLEDLEKMLKVEQEKMLLENKNHETVAAEYKKLCGENDRLNHTYSQLLKETEVLQTDHKNLKSLLNNSKLEQTRLEAEFSKLKEQYQQLDITSTKLNNQCELLSQLKGNLEEENRHLLDQIQTLMLQNRTLLEQNMESKDLFHVEQRQYIDKLNELRRQKEKLEEKIMDQYKFYDPSPPRRRGNWITLKMRKLIKSKKDINRERQKSLTLTPTRSDSSEGFLQLPHQDSQDSSSVGSNSLEDGQTLGTKKSSMVALKRLPFLRNRPKDKDKMKACYRRSMSMNDLVQSMVLAGQWTGSTENLEVPDDISTGKRRKELGAMAFSTTAINFSTVNSSAGFRSKQLVNNKDTTSFEDISPQGVSDDSSTGSRVHASRPASLDSGRTSTSNSNNNASLHEVKAGAVNNQSRPQSHSSGEFSLLHDHEAWSSSGSSPIQYLKRQTRSSPVLQHKISETLESRHHKIKTGSPGSEVVTLQQFLEESNKLTSVQIKSSSQENLLDEVMKSLSVSSDFLGKDKPVSCGLARSVSGKTPGDFYDRRTTKPEFLRPGPRKTEDTYFISSAGKPTPGTQGKIKLVKESSLSRQSKDSNPYATLPRASSVISTAEGTTRRTSIHDFLTKDSRLPISVDSPPAAADSNTTAASNVDKVQESRNSKSRSREQQSS.

The Calponin-homology (CH) domain occupies 12–132 (QFMTSPLVTW…KLLLLLLGCA (121 aa)). Residues 196-425 (HLKRLIDERD…EMAQKQSMDE (230 aa)) are a coiled coil. Phosphoserine is present on residues Ser-233, Ser-237, and Ser-449. Positions 458–1385 (TSSRLLKLEM…KIMDQYKFYD (928 aa)) form a coiled coil. Disordered regions lie at residues 816 to 842 (ENKS…KRLR) and 1010 to 1035 (RQDE…RESQ). Ser-1020 carries the post-translational modification Phosphoserine. Residues 1026–1035 (EDNKWERESQ) are compositionally biased toward basic and acidic residues. Position 1387 is a phosphoserine (Ser-1387). Positions 1390 to 1408 (RRRGNWITLKMRKLIKSKK) are phosphoinositide-binding. Residues 1407-1416 (KKDINRERQK) show a composition bias toward basic and acidic residues. Disordered regions lie at residues 1407–1459 (KKDI…LGTK) and 1559–1601 (TTSF…SNNN). Residue Ser-1417 is modified to Phosphoserine; by PKB/AKT1. 3 stretches are compositionally biased toward polar residues: residues 1417 to 1430 (SLTL…SSEG), 1445 to 1459 (VGSN…LGTK), and 1559 to 1578 (TTSF…STGS). Thr-1421 carries the post-translational modification Phosphothreonine. The short motif at 1672–1702 (KTGSPGSEVVTLQQFLEESNKLTSVQIKSSS) is the GBA element. Thr-1673 is modified (phosphothreonine). Ser-1675 carries the phosphoserine modification. Ser-1690 is modified (phosphoserine; by PKC/PRKCQ). The tract at residues 1713–1823 (SLSVSSDFLG…GTTRRTSIHD (111 aa)) is SH2-like; required for interaction with growth factor receptors. Ser-1717 carries the post-translational modification Phosphoserine. Residues 1736–1871 (SGKTPGDFYD…KSRSREQQSS (136 aa)) form a disordered region. Residues 1743–1763 (FYDRRTTKPEFLRPGPRKTED) are compositionally biased toward basic and acidic residues. A phosphotyrosine mark is found at Tyr-1765 and Tyr-1799. 2 stretches are compositionally biased toward polar residues: residues 1787–1799 (SSLS…SNPY) and 1807–1818 (SVISTAEGTTRR). Ser-1820 and Ser-1837 each carry phosphoserine. A compositionally biased stretch (basic and acidic residues) spans 1820–1830 (SIHDFLTKDSR). Low complexity predominate over residues 1838–1851 (PPAAADSNTTAASN). Positions 1854–1871 (KVQESRNSKSRSREQQSS) are enriched in basic and acidic residues.

This sequence belongs to the CCDC88 family. As to quaternary structure, homodimer. Interacts (via GBA motif) with guanine nucleotide-binding protein G(i) alpha subunits GNAI1, GNAI2 and GNAI3. Also interacts (via GNA motif) with guanine nucleotide-binding protein G(s) alpha subunit GNAS. Interaction with G(i) alpha subunits occurs before interaction with GNAS and is regulated by phosphorylation; phosphorylation at Ser-1675 enhances binding to G(i) alpha subunits while phosphorylation at Ser-1690 abolishes G(i) alpha subunit binding, promoting binding to GNAS. Interacts (via C-terminal SH2-like region) with growth factor receptors EGFR, INSR and KDR/VEGFR2 (via their autophosphorylated cytoplasmic tails). Forms a complex with EGFR and GNAI3 which leads to enhanced EGFR signaling and triggering of cell migration; ligand stimulation is required for recruitment of GNAI3 to the complex. Interacts (tyrosine-phosphorylated form) with phosphatidylinositol 3-kinase (PI3K) regulatory subunit PIK3R1/p85a (via SH2 domains); the interaction enables recruitment of PIK3R1 to the EGFR receptor, enhancing PI3K activity and cell migration. Interacts with serine/threonine-protein kinase PRKCQ; the interaction leads to phosphorylation of CCDC88A and inhibition of its guanine nucleotide exchange factor activity. Interacts (via C-terminus) with DISC1; the interaction is direct. Interacts with AKT proteins; the interaction is inhibited in the presence of DISC1. Interacts with AKT1/PKB (via C-terminus). The non-phosphorylated form interacts with phosphatidylinositol 4-phosphate [PI(4)P] and weakly with phosphatidylinositol 3-phosphate [PI(3)P]. Interacts with microtubules. Interacts with actin. In terms of processing, phosphorylation is induced by epidermal growth factor (EGF) in a phosphoinositide 3-kinase (PI3K)-dependent manner. Phosphorylation by AKT1/PKB is necessary for delocalization from the cell membrane and for cell migration. Phosphorylated on tyrosine residues which promotes binding to phosphatidylinositol 3-kinase (PI3K) regulatory subunit PIK3R1/p85a and enhances PI3K activity. Tyrosine-phosphorylated by both receptor and non-receptor tyrosine kinases in vitro. Tyrosine phosphorylation is required for AKT1-dependent phosphorylation of Ser-1417. Phosphorylation at Ser-1690 by PRKCQ disrupts interaction with GNAI3 and inhibits guanine nucleotide exchange factor activity. As to expression, expressed ubiquitously.

It localises to the cell membrane. The protein resides in the cytoplasm. The protein localises to the cytosol. Its subcellular location is the cytoplasmic vesicle. It is found in the cell projection. It localises to the lamellipodium. The protein resides in the cytoskeleton. The protein localises to the cilium basal body. Its subcellular location is the microtubule organizing center. It is found in the centrosome. It localises to the centriole. In terms of biological role, bifunctional modulator of guanine nucleotide-binding proteins (G proteins). Acts as a non-receptor guanine nucleotide exchange factor which binds to and activates guanine nucleotide-binding protein G(i) alpha subunits. Also acts as a guanine nucleotide dissociation inhibitor for guanine nucleotide-binding protein G(s) subunit alpha GNAS. Essential for cell migration. Interacts in complex with G(i) alpha subunits with the EGFR receptor, retaining EGFR at the cell membrane following ligand stimulation and promoting EGFR signaling which triggers cell migration. Binding to Gi-alpha subunits displaces the beta and gamma subunits from the heterotrimeric G-protein complex which enhances phosphoinositide 3-kinase (PI3K)-dependent phosphorylation and kinase activity of AKT1/PKB. Phosphorylation of AKT1/PKB induces the phosphorylation of downstream effectors GSK3 and FOXO1/FKHR, and regulates DNA replication and cell proliferation. Binds in its tyrosine-phosphorylated form to the phosphatidylinositol 3-kinase (PI3K) regulatory subunit PIK3R1 which enables recruitment of PIK3R1 to the EGFR receptor, enhancing PI3K activity and cell migration. Plays a role as a key modulator of the AKT-mTOR signaling pathway, controlling the tempo of the process of newborn neuron integration during adult neurogenesis, including correct neuron positioning, dendritic development and synapse formation. Inhibition of G(s) subunit alpha GNAS leads to reduced cellular levels of cAMP and suppression of cell proliferation. Essential for the integrity of the actin cytoskeleton. Required for formation of actin stress fibers and lamellipodia. May be involved in membrane sorting in the early endosome. Plays a role in ciliogenesis and cilium morphology and positioning and this may partly be through regulation of the localization of scaffolding protein CROCC/Rootletin. In Homo sapiens (Human), this protein is Girdin (CCDC88A).